The sequence spans 345 residues: Phosphoribosylformylglycinamidine cyclo-ligase (345 aa).

The protein belongs to the AIR synthase family.

It is found in the cytoplasm. The catalysed reaction is 2-formamido-N(1)-(5-O-phospho-beta-D-ribosyl)acetamidine + ATP = 5-amino-1-(5-phospho-beta-D-ribosyl)imidazole + ADP + phosphate + H(+). The protein operates within purine metabolism; IMP biosynthesis via de novo pathway; 5-amino-1-(5-phospho-D-ribosyl)imidazole from N(2)-formyl-N(1)-(5-phospho-D-ribosyl)glycinamide: step 2/2. This is Phosphoribosylformylglycinamidine cyclo-ligase from Pasteurella multocida (strain Pm70).